The sequence spans 907 residues: Protein translocase subunit SecA (907 aa).

Residues Gln86, 104-108, and Asp511 contribute to the ATP site; that span reads GEGKT. 2 stretches are compositionally biased toward basic and acidic residues: residues 838–856 and 869–888; these read AQEE…HESV and EEAP…KRND. Residues 838–907 are disordered; sequence AQEEWKESMS…YKQCHGKVVD (70 aa). Residues Cys890, Cys892, Cys901, and His902 each coordinate Zn(2+). Residues 896-907 show a composition bias toward basic residues; the sequence is KKYKQCHGKVVD.

It belongs to the SecA family. In terms of assembly, monomer and homodimer. Part of the essential Sec protein translocation apparatus which comprises SecA, SecYEG and auxiliary proteins SecDF-YajC and YidC. Zn(2+) is required as a cofactor.

The protein localises to the cell inner membrane. Its subcellular location is the cytoplasm. The enzyme catalyses ATP + H2O + cellular proteinSide 1 = ADP + phosphate + cellular proteinSide 2.. Part of the Sec protein translocase complex. Interacts with the SecYEG preprotein conducting channel. Has a central role in coupling the hydrolysis of ATP to the transfer of proteins into and across the cell membrane, serving both as a receptor for the preprotein-SecB complex and as an ATP-driven molecular motor driving the stepwise translocation of polypeptide chains across the membrane. This Francisella philomiragia subsp. philomiragia (strain ATCC 25017 / CCUG 19701 / FSC 153 / O#319-036) protein is Protein translocase subunit SecA.